We begin with the raw amino-acid sequence, 302 residues long: Nudix hydrolase 22, chloroplastic (302 aa).

The N-terminal 25 residues, Met1 to Leu25, are a transit peptide targeting the chloroplast. The Nudix hydrolase domain occupies Pro73 to Thr229. The short motif at Lys114 to Gly135 is the Nudix box element. Glu129 and Glu133 together coordinate Mg(2+).

Belongs to the Nudix hydrolase family. Requires Mg(2+) as cofactor. The cofactor is Mn(2+). In terms of tissue distribution, expressed in roots, leaves, stems and inflorescences.

Its subcellular location is the plastid. It is found in the chloroplast. Probably mediates the hydrolysis of some nucleoside diphosphate derivatives. The chain is Nudix hydrolase 22, chloroplastic (NUDT22) from Arabidopsis thaliana (Mouse-ear cress).